Here is a 231-residue protein sequence, read N- to C-terminus: Tol-Pal system protein TolQ (231 aa).

Transmembrane regions (helical) follow at residues 20 to 40 (IVVQ…WIMI), 134 to 154 (FLAT…VWGI), and 176 to 196 (IAEA…AVIA).

This sequence belongs to the ExbB/TolQ family. In terms of assembly, the Tol-Pal system is composed of five core proteins: the inner membrane proteins TolA, TolQ and TolR, the periplasmic protein TolB and the outer membrane protein Pal. They form a network linking the inner and outer membranes and the peptidoglycan layer.

It localises to the cell inner membrane. Functionally, part of the Tol-Pal system, which plays a role in outer membrane invagination during cell division and is important for maintaining outer membrane integrity. The polypeptide is Tol-Pal system protein TolQ (Pseudomonas aeruginosa (strain ATCC 15692 / DSM 22644 / CIP 104116 / JCM 14847 / LMG 12228 / 1C / PRS 101 / PAO1)).